Reading from the N-terminus, the 369-residue chain is Core histone macro-H2A.1 (369 aa).

Residues lysine 7 and lysine 9 each carry the N6-lactoyllysine; alternate modification. One can recognise a Histone H2A domain in the interval 15-90; it reads RSAKAGVIFP…ILLAVANDEE (76 aa). N6-methyllysine is present on lysine 18. N6-acetyllysine; alternate is present on lysine 116. Lysine 116 participates in a covalent cross-link: Glycyl lysine isopeptide (Lys-Gly) (interchain with G-Cter in ubiquitin); alternate. Lysine 117 participates in a covalent cross-link: Glycyl lysine isopeptide (Lys-Gly) (interchain with G-Cter in ubiquitin). Lysine 123 bears the N6-acetyllysine; alternate mark. N6,N6-dimethyllysine; alternate is present on lysine 123. Lysine 123 participates in a covalent cross-link: Glycyl lysine isopeptide (Lys-Gly) (interchain with G-Cter in SUMO2); alternate. Residues 128–180 form a disordered region; that stretch reads ITPPPAKKAKSPSQKKTVSKKTGGKKGARKSKKKQGEVSKSASADSTTEGTPA. Threonine 129 bears the Phosphothreonine mark. Residues 144–160 show a composition bias toward basic residues; it reads TVSKKTGGKKGARKSKK. Over residues 165-177 the composition is skewed to polar residues; the sequence is VSKSASADSTTEG. Residue lysine 167 forms a Glycyl lysine isopeptide (Lys-Gly) (interchain with G-Cter in SUMO2) linkage. A phosphoserine mark is found at serine 170 and serine 173. Phosphothreonine is present on threonine 178. A Macro domain is found at 184-367; the sequence is TVLSTKSLFL…IYVQEMAKLD (184 aa). Lysine 189 is covalently cross-linked (Glycyl lysine isopeptide (Lys-Gly) (interchain with G-Cter in SUMO2)). A glycoprotein-binding residues include aspartate 203, isoleucine 204, valine 226, serine 275, glycine 312, serine 313, glycine 314, and asparagine 316. A Glycyl lysine isopeptide (Lys-Gly) (interchain with G-Cter in SUMO2) cross-link involves residue lysine 320.

The protein belongs to the histone H2A family. The nucleosome is a histone octamer containing two molecules each of H2A, H2B, H3 and H4 assembled in one H3-H4 heterotetramer and two H2A-H2B heterodimers. In terms of processing, ADP-ribosylated. Post-translationally, monoubiquitinated at either Lys-116 or Lys-117. May also be polyubiquitinated. Ubiquitination is mediated by the CUL3/SPOP E3 complex and does not promote proteasomal degradation. Instead, it is required for enrichment in inactive X chromosome chromatin. In terms of tissue distribution, present in liver (at protein level).

It is found in the nucleus. The protein resides in the chromosome. Its function is as follows. Variant histone H2A which replaces conventional H2A in a subset of nucleosomes where it represses transcription. Nucleosomes wrap and compact DNA into chromatin, limiting DNA accessibility to the cellular machineries which require DNA as a template. Histones thereby play a central role in transcription regulation, DNA repair, DNA replication and chromosomal stability. DNA accessibility is regulated via a complex set of post-translational modifications of histones, also called histone code, and nucleosome remodeling. Functionally, isoform that specifically binds poly-ADP-ribose and O-acetyl-ADP-ribose and plays a key role in NAD(+) metabolism. Able to bind to the ends of poly-ADP-ribose chains created by PARP1 and cap them. This prevents PARP1 from further addition of ADP-ribose and thus limits the consumption of nuclear NAD(+), allowing the cell to maintain proper NAD(+) levels in both the nucleus and the mitochondria to promote proper mitochondrial respiration. In contrast to isoform 1, does not bind poly-ADP-ribose. The protein is Core histone macro-H2A.1 of Gallus gallus (Chicken).